Reading from the N-terminus, the 201-residue chain is Orotate phosphoribosyltransferase (201 aa).

5-phospho-alpha-D-ribose 1-diphosphate contacts are provided by residues K90 and 113–121 (EDIITTGGS). Positions 117 and 145 each coordinate orotate.

The protein belongs to the purine/pyrimidine phosphoribosyltransferase family. PyrE subfamily. As to quaternary structure, homodimer. Requires Mg(2+) as cofactor.

The enzyme catalyses orotidine 5'-phosphate + diphosphate = orotate + 5-phospho-alpha-D-ribose 1-diphosphate. It functions in the pathway pyrimidine metabolism; UMP biosynthesis via de novo pathway; UMP from orotate: step 1/2. Catalyzes the transfer of a ribosyl phosphate group from 5-phosphoribose 1-diphosphate to orotate, leading to the formation of orotidine monophosphate (OMP). The sequence is that of Orotate phosphoribosyltransferase from Sulfurovum sp. (strain NBC37-1).